Consider the following 181-residue polypeptide: ATP synthase subunit delta (181 aa).

The protein belongs to the ATPase delta chain family. F-type ATPases have 2 components, F(1) - the catalytic core - and F(0) - the membrane proton channel. F(1) has five subunits: alpha(3), beta(3), gamma(1), delta(1), epsilon(1). F(0) has three main subunits: a(1), b(2) and c(10-14). The alpha and beta chains form an alternating ring which encloses part of the gamma chain. F(1) is attached to F(0) by a central stalk formed by the gamma and epsilon chains, while a peripheral stalk is formed by the delta and b chains.

The protein localises to the cell inner membrane. Functionally, f(1)F(0) ATP synthase produces ATP from ADP in the presence of a proton or sodium gradient. F-type ATPases consist of two structural domains, F(1) containing the extramembraneous catalytic core and F(0) containing the membrane proton channel, linked together by a central stalk and a peripheral stalk. During catalysis, ATP synthesis in the catalytic domain of F(1) is coupled via a rotary mechanism of the central stalk subunits to proton translocation. In terms of biological role, this protein is part of the stalk that links CF(0) to CF(1). It either transmits conformational changes from CF(0) to CF(1) or is implicated in proton conduction. The protein is ATP synthase subunit delta of Chlorobaculum parvum (strain DSM 263 / NCIMB 8327) (Chlorobium vibrioforme subsp. thiosulfatophilum).